Here is a 158-residue protein sequence, read N- to C-terminus: Transcription elongation factor GreA (158 aa).

Belongs to the GreA/GreB family.

Necessary for efficient RNA polymerase transcription elongation past template-encoded arresting sites. The arresting sites in DNA have the property of trapping a certain fraction of elongating RNA polymerases that pass through, resulting in locked ternary complexes. Cleavage of the nascent transcript by cleavage factors such as GreA or GreB allows the resumption of elongation from the new 3'terminus. GreA releases sequences of 2 to 3 nucleotides. In Pseudomonas syringae pv. tomato (strain ATCC BAA-871 / DC3000), this protein is Transcription elongation factor GreA.